The sequence spans 215 residues: 25 kDa ookinete surface antigen (215 aa).

The N-terminal stretch at 1–16 (MNMSYLFFFFFIQLVL) is a signal peptide. An EGF-like 1; truncated domain is found at 29 to 58 (CKDGFLIQMSNHFECNCNPGFVLTSESTCE). EGF-like domains follow at residues 59–104 (NKVE…SICV), 104–148 (VPNE…NTCT), and 151–191 (GQTE…NACI). Disulfide bonds link Cys-63-Cys-78, Cys-72-Cys-90, Cys-92-Cys-103, Cys-108-Cys-118, Cys-113-Cys-131, Cys-133-Cys-147, Cys-155-Cys-166, Cys-159-Cys-175, and Cys-177-Cys-190. N-linked (GlcNAc...) asparagine glycans are attached at residues Asn-144 and Asn-163. The GPI-anchor amidated serine moiety is linked to residue Ser-192. A propeptide spans 193-215 (FSLFNILNLSIIFIISLIYFYII) (removed in mature form). N-linked (GlcNAc...) asparagine glycosylation occurs at Asn-200.

The protein localises to the cell membrane. This chain is 25 kDa ookinete surface antigen, found in Plasmodium gallinaceum.